Here is a 58-residue protein sequence, read N- to C-terminus: Probable ferredoxin (58 aa).

4Fe-4S ferredoxin-type domains follow at residues 2 to 30 and 31 to 58; these read VAKVNVDLCTGCGSCVDECPAAAISLNDD and GIATVDESECLDCGSCEDACPNNAITIE. [4Fe-4S] cluster contacts are provided by C10, C13, C16, C20, C40, C43, C46, and C50.

[4Fe-4S] cluster is required as a cofactor.

Functionally, ferredoxins are iron-sulfur proteins that transfer electrons in a wide variety of metabolic reactions. This chain is Probable ferredoxin, found in Methanosarcina thermophila.